The primary structure comprises 446 residues: MRYLPLNSEDRSEMLARIGVDSIDALFSSIPEASRLSRDLDLPLRRSEMETQRLLSGMAARNTPASSAPFFIGAGAYKHHIPASVDHLIQRSEFLTSYTPYQPEISQGTLQAIFEFQTQVAALTAMDVANASMYDGSTATMEAVLMAHRVTKRRKAVLSGGLHPHYADVVRTVSKMTDNDALSLPPDVFAAEDLAAEIDEETSCVVVQTPDAFGNLRDLSPLAAACKEHGALLIAVFTEAVSLGLVKPPGAMGADIVVGEGQSIGNGLNFGGPYVGLFATRQKYLRQMPGRLCGETVDADGRRGFVLTLSTREQHIKRDKATSSICTNAGLCCLAFTMHLTLLGEAGLRQLARVNHANAVDLAGRFAQIYGVEVLNRSFFNEFTLRVPGPAAEIVEHLAQKGILGGVPASRLWPGEDLDDLMIVASSEINTDEDRAAFASALRGIA.

The protein belongs to the GcvP family. N-terminal subunit subfamily. In terms of assembly, the glycine cleavage system is composed of four proteins: P, T, L and H. In this organism, the P 'protein' is a heterodimer of two subunits.

The catalysed reaction is N(6)-[(R)-lipoyl]-L-lysyl-[glycine-cleavage complex H protein] + glycine + H(+) = N(6)-[(R)-S(8)-aminomethyldihydrolipoyl]-L-lysyl-[glycine-cleavage complex H protein] + CO2. Functionally, the glycine cleavage system catalyzes the degradation of glycine. The P protein binds the alpha-amino group of glycine through its pyridoxal phosphate cofactor; CO(2) is released and the remaining methylamine moiety is then transferred to the lipoamide cofactor of the H protein. The chain is Probable glycine dehydrogenase (decarboxylating) subunit 1 from Methylocella silvestris (strain DSM 15510 / CIP 108128 / LMG 27833 / NCIMB 13906 / BL2).